The following is a 142-amino-acid chain: MRIINAEGLILGRLASKVAKMLLEGEEVVIVNAEKAVITGNRDVIFKKYKQRTELRTLTNPRRGPFYPKRSDEIVRRTIRGMLPWKTDRGRKAFKRLKVYVGIPKEFQGKELETIIEAHVSRLSRPKYVTVGEVAKFLGGKF.

It belongs to the universal ribosomal protein uL13 family. In terms of assembly, part of the 50S ribosomal subunit.

Functionally, this protein is one of the early assembly proteins of the 50S ribosomal subunit, although it is not seen to bind rRNA by itself. It is important during the early stages of 50S assembly. In Pyrococcus furiosus (strain ATCC 43587 / DSM 3638 / JCM 8422 / Vc1), this protein is Large ribosomal subunit protein uL13.